The chain runs to 200 residues: Orotate phosphoribosyltransferase (200 aa).

Residues Arg-95, Lys-99, His-101, and 121 to 129 (DDVATTGGS) contribute to the 5-phospho-alpha-D-ribose 1-diphosphate site. Positions 125 and 153 each coordinate orotate.

This sequence belongs to the purine/pyrimidine phosphoribosyltransferase family. PyrE subfamily. As to quaternary structure, homodimer. Requires Mg(2+) as cofactor.

The enzyme catalyses orotidine 5'-phosphate + diphosphate = orotate + 5-phospho-alpha-D-ribose 1-diphosphate. It functions in the pathway pyrimidine metabolism; UMP biosynthesis via de novo pathway; UMP from orotate: step 1/2. Functionally, catalyzes the transfer of a ribosyl phosphate group from 5-phosphoribose 1-diphosphate to orotate, leading to the formation of orotidine monophosphate (OMP). The polypeptide is Orotate phosphoribosyltransferase (Cenarchaeum symbiosum (strain A)).